Consider the following 262-residue polypeptide: Hydroxyethylthiazole kinase (262 aa).

Methionine 39 provides a ligand contact to substrate. ATP-binding residues include lysine 115 and threonine 160. Substrate is bound at residue glycine 187.

The protein belongs to the Thz kinase family. Requires Mg(2+) as cofactor.

It catalyses the reaction 5-(2-hydroxyethyl)-4-methylthiazole + ATP = 4-methyl-5-(2-phosphooxyethyl)-thiazole + ADP + H(+). Its pathway is cofactor biosynthesis; thiamine diphosphate biosynthesis; 4-methyl-5-(2-phosphoethyl)-thiazole from 5-(2-hydroxyethyl)-4-methylthiazole: step 1/1. Its function is as follows. Catalyzes the phosphorylation of the hydroxyl group of 4-methyl-5-beta-hydroxyethylthiazole (THZ). This is Hydroxyethylthiazole kinase from Staphylococcus epidermidis (strain ATCC 35984 / DSM 28319 / BCRC 17069 / CCUG 31568 / BM 3577 / RP62A).